A 335-amino-acid chain; its full sequence is Large ribosomal subunit protein uL3 (335 aa).

The protein belongs to the universal ribosomal protein uL3 family. In terms of assembly, part of the 50S ribosomal subunit. Forms a cluster with proteins L14 and L24e.

Its function is as follows. One of the primary rRNA binding proteins, it binds directly near the 3'-end of the 23S rRNA, where it nucleates assembly of the 50S subunit. This Methanocaldococcus jannaschii (strain ATCC 43067 / DSM 2661 / JAL-1 / JCM 10045 / NBRC 100440) (Methanococcus jannaschii) protein is Large ribosomal subunit protein uL3.